A 755-amino-acid polypeptide reads, in one-letter code: Biodegradative arginine decarboxylase (755 aa).

Lysine 386 carries the post-translational modification N6-(pyridoxal phosphate)lysine.

It belongs to the Orn/Lys/Arg decarboxylase class-I family. As to quaternary structure, homodecamer. The basic unit is a homodimer, organized into a ring of giving a pentamer of five homodimers. Requires pyridoxal 5'-phosphate as cofactor.

It localises to the cytoplasm. The enzyme catalyses L-arginine + H(+) = agmatine + CO2. Its activity is regulated as follows. Homodimers are probably inactive, their assembly into a homodecamer at low pH requires neutralization of negatively charged residues. This uses cytoplasmic protons, contributing pH regulation and stabilizes the homodecamer. In terms of biological role, component of the acid-resistance (AR) system allowing enteric pathogens to survive the acidic environment in the stomach. ADC can be found in two forms: biodegradative (this enzyme) and biosynthetic (speA). The biodegradative form plays a role in regulating pH by consuming proteins. Converts arginine imported by AdiC to agmatine which is then exported by AdiC. This Escherichia coli (strain K12) protein is Biodegradative arginine decarboxylase (adiA).